Here is a 121-residue protein sequence, read N- to C-terminus: Ribonuclease P protein component (121 aa).

It belongs to the RnpA family. In terms of assembly, consists of a catalytic RNA component (M1 or rnpB) and a protein subunit.

It carries out the reaction Endonucleolytic cleavage of RNA, removing 5'-extranucleotides from tRNA precursor.. Its function is as follows. RNaseP catalyzes the removal of the 5'-leader sequence from pre-tRNA to produce the mature 5'-terminus. It can also cleave other RNA substrates such as 4.5S RNA. The protein component plays an auxiliary but essential role in vivo by binding to the 5'-leader sequence and broadening the substrate specificity of the ribozyme. This is Ribonuclease P protein component from Rickettsia prowazekii (strain Madrid E).